The following is a 412-amino-acid chain: Subtilisin-like protease 6 (412 aa).

A signal peptide spans 1–20 (MGFITKAIPIVLAALSTVNG). Positions 21-127 (AKILEAGPHA…VRTSTNGTNL (107 aa)) are excised as a propeptide. The region spanning 36-120 (KYIVVMKREV…YIEPDFVVRT (85 aa)) is the Inhibitor I9 domain. Residues asparagine 123 and asparagine 126 are each glycosylated (N-linked (GlcNAc...) asparagine). The Peptidase S8 domain occupies 135–412 (SWGLARVSSK…SKLIYNGSGK (278 aa)). Catalysis depends on charge relay system residues aspartate 167 and histidine 198. 2 N-linked (GlcNAc...) asparagine glycosylation sites follow: asparagine 252 and asparagine 264. The active-site Charge relay system is serine 358. N-linked (GlcNAc...) asparagine glycosylation is present at asparagine 408.

The protein belongs to the peptidase S8 family.

The protein resides in the secreted. Functionally, secreted subtilisin-like serine protease with keratinolytic activity that contributes to pathogenicity. This Trichophyton tonsurans (Scalp ringworm fungus) protein is Subtilisin-like protease 6 (SUB6).